Here is a 460-residue protein sequence, read N- to C-terminus: MALSAAIVLAAGEGTRMRSNKPKVLHAFAGKTFLNRVMDSVAALNPDTLAVVVHFQAERVAEAARSYDEQVTIVNQDDIPGTGRAVQCAMAQLTEAGKVDGPVLIAASDMPLLDSETLHRLVEFHTASGNGATVLTTILDDPTGYGRIIRDREGNVLRIVEQKDANRSELAVQEVNTSVYVFEASVLTEAIAGLKSNNAQGEFYLTDALETAKAAGKVGAFAAPDPLTVEGVNDRVQLAALSKTYNRRVCERWMRDGVTILDPETTWIEDDVQIGRDATILPGSFLQGHTVVGEDAIVGPYTTLIDATVDEGAVVERSRVQESHIGARTNIGPWTYLRPGNEFGEDAKAGAFVEMKKAHIGNGTKVPHLSYVGDAQLGDHTNIGGGTITANYDGVHKNRTTIGSGCHVGAGNLFVAPVEVGDNVTTGAGSVVRHAVPSDTMVYSENTQHNVEGWKPAWER.

Positions 1 to 235 are pyrophosphorylase; sequence MALSAAIVLA…PLTVEGVNDR (235 aa). UDP-N-acetyl-alpha-D-glucosamine contacts are provided by residues 9–12, Lys23, Gln76, and 81–82; these read LAAG and GT. Asp109 serves as a coordination point for Mg(2+). UDP-N-acetyl-alpha-D-glucosamine-binding residues include Gly146, Glu161, Asn176, and Asn233. Asn233 lines the Mg(2+) pocket. The segment at 236–256 is linker; the sequence is VQLAALSKTYNRRVCERWMRD. Positions 257–460 are N-acetyltransferase; sequence GVTILDPETT…VEGWKPAWER (204 aa). The UDP-N-acetyl-alpha-D-glucosamine site is built by Arg338 and Lys356. The Proton acceptor role is filled by His368. Residues Tyr371 and Asn382 each coordinate UDP-N-acetyl-alpha-D-glucosamine. Acetyl-CoA contacts are provided by residues 391 to 392 and Ala428; that span reads NY.

It in the N-terminal section; belongs to the N-acetylglucosamine-1-phosphate uridyltransferase family. This sequence in the C-terminal section; belongs to the transferase hexapeptide repeat family. As to quaternary structure, homotrimer. It depends on Mg(2+) as a cofactor.

The protein localises to the cytoplasm. It catalyses the reaction alpha-D-glucosamine 1-phosphate + acetyl-CoA = N-acetyl-alpha-D-glucosamine 1-phosphate + CoA + H(+). It carries out the reaction N-acetyl-alpha-D-glucosamine 1-phosphate + UTP + H(+) = UDP-N-acetyl-alpha-D-glucosamine + diphosphate. It participates in nucleotide-sugar biosynthesis; UDP-N-acetyl-alpha-D-glucosamine biosynthesis; N-acetyl-alpha-D-glucosamine 1-phosphate from alpha-D-glucosamine 6-phosphate (route II): step 2/2. The protein operates within nucleotide-sugar biosynthesis; UDP-N-acetyl-alpha-D-glucosamine biosynthesis; UDP-N-acetyl-alpha-D-glucosamine from N-acetyl-alpha-D-glucosamine 1-phosphate: step 1/1. It functions in the pathway bacterial outer membrane biogenesis; LPS lipid A biosynthesis. Functionally, catalyzes the last two sequential reactions in the de novo biosynthetic pathway for UDP-N-acetylglucosamine (UDP-GlcNAc). The C-terminal domain catalyzes the transfer of acetyl group from acetyl coenzyme A to glucosamine-1-phosphate (GlcN-1-P) to produce N-acetylglucosamine-1-phosphate (GlcNAc-1-P), which is converted into UDP-GlcNAc by the transfer of uridine 5-monophosphate (from uridine 5-triphosphate), a reaction catalyzed by the N-terminal domain. This is Bifunctional protein GlmU from Bifidobacterium longum (strain NCC 2705).